A 431-amino-acid chain; its full sequence is Gamma-glutamyl phosphate reductase (431 aa).

The protein belongs to the gamma-glutamyl phosphate reductase family.

The protein localises to the cytoplasm. It carries out the reaction L-glutamate 5-semialdehyde + phosphate + NADP(+) = L-glutamyl 5-phosphate + NADPH + H(+). The protein operates within amino-acid biosynthesis; L-proline biosynthesis; L-glutamate 5-semialdehyde from L-glutamate: step 2/2. Functionally, catalyzes the NADPH-dependent reduction of L-glutamate 5-phosphate into L-glutamate 5-semialdehyde and phosphate. The product spontaneously undergoes cyclization to form 1-pyrroline-5-carboxylate. This is Gamma-glutamyl phosphate reductase from Methylobacterium sp. (strain 4-46).